The sequence spans 346 residues: DNA repair protein XRCC3 (346 aa).

Met1 is subject to N-acetylmethionine. 107–114 contacts ATP; sequence GRSSAGKT.

This sequence belongs to the RecA family. RAD51 subfamily. In terms of assembly, interacts with RAD51C and RAD51. Part of the CX3 complex consisting of RAD51C and XRCC3; the complex has a ring-like structure arranged into a flat disk around a central channel; CX3 can interact with RAD51 in vitro. Forms a complex with FANCD2, BRCA2 and phosphorylated FANCG. Interacts with SWSAP1 and ZSWIM7; involved in homologous recombination repair. Interacts directly with PALB2 which may serve as a scaffold for a HR complex containing PALB2, BRCA2, RAD51C, RAD51 and XRCC3.

Its subcellular location is the nucleus. The protein localises to the cytoplasm. It localises to the perinuclear region. It is found in the mitochondrion. Involved in the homologous recombination repair (HRR) pathway of double-stranded DNA, thought to repair chromosomal fragmentation, translocations and deletions. Part of the RAD51 paralog protein complex CX3 which acts in the BRCA1-BRCA2-dependent HR pathway. Upon DNA damage, CX3 acts downstream of RAD51 recruitment; the complex binds predominantly to the intersection of the four duplex arms of the Holliday junction (HJ) and to junctions of replication forks. Involved in HJ resolution and thus in processing HR intermediates late in the DNA repair process; the function may be linked to the CX3 complex and seems to involve GEN1 during mitotic cell cycle progression. Part of a PALB2-scaffolded HR complex containing BRCA2 and RAD51C and which is thought to play a role in DNA repair by HR. Plays a role in regulating mitochondrial DNA copy number under conditions of oxidative stress in the presence of RAD51 and RAD51C. This chain is DNA repair protein XRCC3 (XRCC3), found in Homo sapiens (Human).